The following is a 433-amino-acid chain: Citrate synthase, mitochondrial (433 aa).

Active-site residues include His274 and His320. Arg329 contacts oxaloacetate. Residue Asp375 is part of the active site. Positions 401 and 421 each coordinate oxaloacetate.

It belongs to the citrate synthase family. In terms of assembly, homodimer.

It is found in the mitochondrion matrix. The enzyme catalyses oxaloacetate + acetyl-CoA + H2O = citrate + CoA + H(+). It participates in carbohydrate metabolism; tricarboxylic acid cycle; isocitrate from oxaloacetate: step 1/2. In terms of biological role, key enzyme of the Krebs tricarboxylic acid cycle which catalyzes the synthesis of citrate from acetyl coenzyme A and oxaloacetate. The chain is Citrate synthase, mitochondrial (CS) from Gallus gallus (Chicken).